A 1000-amino-acid polypeptide reads, in one-letter code: Chromosome transmission fidelity protein 18 homolog (1000 aa).

3 disordered regions span residues 53 to 89 (SAGD…RDAS), 130 to 159 (AGNS…DSKF), and 272 to 301 (EFGE…SHSL). Over residues 60–70 (SNANSKPTGDS) the composition is skewed to polar residues. Residues 272 to 295 (EFGENDSEILENDDNAGEEDDEDE) show a composition bias toward acidic residues. 396–403 (GPPGLGKT) contacts ATP. Residues 888 to 898 (ARNAGRDNTTA) show a composition bias toward polar residues. A disordered region spans residues 888-916 (ARNAGRDNTTAAAAVKTADPKGAKSAAKP).

Belongs to the activator 1 small subunits family. CTF18 subfamily. In terms of assembly, component of the CTF18-RFC complex, which consists of ctf18, ctf8, dcc1, rfc2, rfc3, rfc4 and rfc5. The CTF18-RFC complex associates with pcna.

The protein localises to the nucleus. Its function is as follows. Chromosome cohesion factor involved in sister chromatid cohesion and fidelity of chromosome transmission. Component of one of the cell nuclear antigen loader complexes, CTF18-replication factor C (CTF18-RFC), which consists of ctf18, ctf8, dcc1, rfc2, rfc3, rfc4 and rfc5. The CTF18-RFC complex binds to single-stranded and primed DNAs and has weak ATPase activity that is stimulated by the presence of primed DNA, replication protein A (RPA) and by proliferating cell nuclear antigen (pcna). The CTF18-RFC complex catalyzes the ATP-dependent loading of pcna onto primed and gapped DNA. The protein is Chromosome transmission fidelity protein 18 homolog (chtf18) of Xenopus laevis (African clawed frog).